The sequence spans 192 residues: Peptidyl-tRNA hydrolase (192 aa).

Tyr-14 contacts tRNA. The Proton acceptor role is filled by His-19. Residues Tyr-64, Asn-66, and Asn-112 each contribute to the tRNA site.

Belongs to the PTH family. In terms of assembly, monomer.

The protein resides in the cytoplasm. It carries out the reaction an N-acyl-L-alpha-aminoacyl-tRNA + H2O = an N-acyl-L-amino acid + a tRNA + H(+). In terms of biological role, hydrolyzes ribosome-free peptidyl-tRNAs (with 1 or more amino acids incorporated), which drop off the ribosome during protein synthesis, or as a result of ribosome stalling. Catalyzes the release of premature peptidyl moieties from peptidyl-tRNA molecules trapped in stalled 50S ribosomal subunits, and thus maintains levels of free tRNAs and 50S ribosomes. The sequence is that of Peptidyl-tRNA hydrolase from Anaeromyxobacter dehalogenans (strain 2CP-C).